The sequence spans 254 residues: MNSQFAGLTREACVALLASYPLSVGILAGQWIALHRYLQQLEALNQPLLHLDLMDGQFCPQFTVGPWAVGQLPQTFIKDVHLMVADQWTAAQACVKAGAHCITLQAEGDIHLHHTLSWLGQQTVPVIGGEMPVIRGISLCPATPLDVIIPILSDVEVIQLLAVNPGYGSKMRSSDLHERVAQLLCLLGDKREGKIIVIDGSLTQDQLPSLIAQGIDRVVSGSALFRDDRLVENTRSWRAMFKVAGDTTFLPSTA.

The helical transmembrane segment at 14-34 (VALLASYPLSVGILAGQWIAL) threads the bilayer. The a divalent metal cation site is built by histidine 50, aspartate 52, and histidine 81. Catalysis depends on aspartate 52, which acts as the Proton acceptor. Residues histidine 81, 166-169 (GYGS), 199-201 (DGS), and 221-222 (GS) each bind substrate. A divalent metal cation is bound at residue aspartate 199. The active-site Proton donor is the aspartate 199.

It belongs to the ribulose-phosphate 3-epimerase family. A divalent metal cation serves as cofactor.

It is found in the cell membrane. The chain is Putative epimerase LsrE (lsrE) from Salmonella choleraesuis (strain SC-B67).